The following is a 373-amino-acid chain: 3 beta-hydroxysteroid dehydrogenase/Delta 5--&gt;4-isomerase type 1 (373 aa).

NADP(+) contacts are provided by residues 10–15, Y155, and K159; that span reads GAGGFL. K159 functions as the Proton donor in the catalytic mechanism. A helical transmembrane segment spans residues 288–308; it reads LALMYWIGFLLEVVSFLLSPV.

The protein belongs to the 3-beta-HSD family. As to expression, adrenal glands, testes and ovaries.

It localises to the endoplasmic reticulum membrane. The protein resides in the mitochondrion membrane. The enzyme catalyses a 3beta-hydroxy-Delta(5)-steroid + NAD(+) = a 3-oxo-Delta(5)-steroid + NADH + H(+). It carries out the reaction pregnenolone + NAD(+) = pregn-5-ene-3,20-dione + NADH + H(+). It catalyses the reaction 3beta-hydroxyandrost-5-en-17-one + NAD(+) = androst-5-ene-3,17-dione + NADH + H(+). The catalysed reaction is androst-5-en-3beta,17beta-diol + NAD(+) = 17beta-hydroxy-androst-5-en-3-one + NADH + H(+). The enzyme catalyses a 3beta-hydroxysteroid + NADP(+) = a 3-oxosteroid + NADPH + H(+). It carries out the reaction 5alpha-androstane-3beta,17beta-diol + NADP(+) = 17beta-hydroxy-5alpha-androstan-3-one + NADPH + H(+). It catalyses the reaction 3beta-hydroxy-5alpha-androstan-17-one + NADP(+) = 5alpha-androstan-3,17-dione + NADPH + H(+). The catalysed reaction is a 3-oxo-Delta(5)-steroid = a 3-oxo-Delta(4)-steroid. The enzyme catalyses pregn-5-ene-3,20-dione = progesterone. It carries out the reaction androst-5-ene-3,17-dione = androst-4-ene-3,17-dione. It catalyses the reaction 17beta-hydroxy-androst-5-en-3-one = testosterone. The catalysed reaction is 5alpha-androstane-3beta,17beta-diol + NAD(+) = 17beta-hydroxy-5alpha-androstan-3-one + NADH + H(+). The protein operates within steroid hormone biosynthesis. It functions in the pathway steroid metabolism. A bifunctional enzyme responsible for the oxidation and isomerization of 3beta-hydroxy-Delta(5)-steroid precursors to 3-oxo-Delta(4)-steroids, an essential step in steroid hormone biosynthesis. Specifically catalyzes the conversion of pregnenolone to progesterone, 17alpha-hydroxypregnenolone to 17alpha-hydroxyprogesterone, dehydroepiandrosterone (DHEA) to 4-androstenedione and androstenediol to testosterone. Additionally, catalyzes the interconversion between 3beta-hydroxy and 3-oxo-5alpha-androstane steroids controlling the bioavalability of the active forms. Specifically converts dihydrotestosterone to its inactive form 5alpha-androstanediol, that does not bind androgen receptor/AR. Also converts androstanedione, a precursor of testosterone and estrone, to epiandrosterone. Expected to use NAD(+) as preferred electron donor for the 3beta-hydroxy-steroid dehydrogenase activity and NADPH for the 3-ketosteroid reductase activity. The polypeptide is 3 beta-hydroxysteroid dehydrogenase/Delta 5--&gt;4-isomerase type 1 (HSD3B1) (Macaca mulatta (Rhesus macaque)).